We begin with the raw amino-acid sequence, 411 residues long: D-galactonate dehydratase family member SBI_01856 (411 aa).

Substrate-binding residues include Asn45 and His130. The active-site Proton donor/acceptor is the Tyr167. Asp219 provides a ligand contact to Mg(2+). His221 (proton donor/acceptor) is an active-site residue. 2 residues coordinate Mg(2+): Glu245 and Glu271. Residues Glu271, Arg292, His321, Asp325, and Glu348 each coordinate substrate.

The protein belongs to the mandelate racemase/muconate lactonizing enzyme family. GalD subfamily. Requires Mg(2+) as cofactor.

It carries out the reaction D-gluconate = 2-dehydro-3-deoxy-D-gluconate + H2O. Functionally, has low D-gluconate dehydratase activity (in vitro), suggesting that it has no significant role in D-gluconate degradation in vivo. Has no detectable activity with a panel of 70 other acid sugars (in vitro). This chain is D-galactonate dehydratase family member SBI_01856, found in Streptomyces bingchenggensis (strain BCW-1).